Reading from the N-terminus, the 242-residue chain is 1-(5-phosphoribosyl)-5-[(5-phosphoribosylamino)methylideneamino] imidazole-4-carboxamide isomerase (242 aa).

Catalysis depends on Asp8, which acts as the Proton acceptor. Asp129 serves as the catalytic Proton donor.

This sequence belongs to the HisA/HisF family.

Its subcellular location is the cytoplasm. It carries out the reaction 1-(5-phospho-beta-D-ribosyl)-5-[(5-phospho-beta-D-ribosylamino)methylideneamino]imidazole-4-carboxamide = 5-[(5-phospho-1-deoxy-D-ribulos-1-ylimino)methylamino]-1-(5-phospho-beta-D-ribosyl)imidazole-4-carboxamide. It functions in the pathway amino-acid biosynthesis; L-histidine biosynthesis; L-histidine from 5-phospho-alpha-D-ribose 1-diphosphate: step 4/9. The sequence is that of 1-(5-phosphoribosyl)-5-[(5-phosphoribosylamino)methylideneamino] imidazole-4-carboxamide isomerase from Maridesulfovibrio salexigens (strain ATCC 14822 / DSM 2638 / NCIMB 8403 / VKM B-1763) (Desulfovibrio salexigens).